The following is a 406-amino-acid chain: Peptidase T (406 aa).

Histidine 78 contributes to the Zn(2+) binding site. Aspartate 80 is a catalytic residue. Zn(2+) is bound at residue aspartate 139. Glutamate 173 acts as the Proton acceptor in catalysis. The Zn(2+) site is built by glutamate 174, aspartate 196, and histidine 378.

The protein belongs to the peptidase M20B family. Requires Zn(2+) as cofactor.

Its subcellular location is the cytoplasm. The enzyme catalyses Release of the N-terminal residue from a tripeptide.. In terms of biological role, cleaves the N-terminal amino acid of tripeptides. The polypeptide is Peptidase T (Clostridium perfringens (strain SM101 / Type A)).